Here is a 423-residue protein sequence, read N- to C-terminus: Glutamyl-tRNA reductase (423 aa).

Residues 51–54, S99, 104–106, and Q110 contribute to the substrate site; these read TCNR and EDQ. C52 serves as the catalytic Nucleophile. Position 179 to 184 (179 to 184) interacts with NADP(+); the sequence is GSGEMG.

This sequence belongs to the glutamyl-tRNA reductase family. Homodimer.

The enzyme catalyses (S)-4-amino-5-oxopentanoate + tRNA(Glu) + NADP(+) = L-glutamyl-tRNA(Glu) + NADPH + H(+). Its pathway is porphyrin-containing compound metabolism; protoporphyrin-IX biosynthesis; 5-aminolevulinate from L-glutamyl-tRNA(Glu): step 1/2. Its function is as follows. Catalyzes the NADPH-dependent reduction of glutamyl-tRNA(Glu) to glutamate 1-semialdehyde (GSA). The polypeptide is Glutamyl-tRNA reductase (Methanoculleus marisnigri (strain ATCC 35101 / DSM 1498 / JR1)).